Consider the following 411-residue polypeptide: O-glucosyltransferase rumi (411 aa).

The signal sequence occupies residues Met1–Ala20. Intrachain disulfides connect Cys64–Cys75, Cys73–Cys378, Cys120–Cys126, and Cys282–Cys305. Asp151 functions as the Proton donor/acceptor in the catalytic mechanism. The segment at Ala192 to Pro197 is interaction with the consensus sequence C-X-S-X-[PA]-C in peptide substrates. Residues Arg229–Thr233, Arg237, Val276–Phe278, and Ala294–Arg298 each bind UDP-alpha-D-glucose. The short motif at Lys408–Leu411 is the Prevents secretion from ER element.

Belongs to the glycosyltransferase 90 family.

It is found in the endoplasmic reticulum lumen. It functions in the pathway protein modification; protein glycosylation. Functionally, protein O-glucosyltransferase. Catalyzes the reaction that attaches glucose through an O-glycosidic linkage to a conserved serine residue found in the consensus sequence C-X-S-X-[PA]-C in epidermal growth factor-like repeats. Regulates Notch signaling by glucosylating Notch in the ER, glucosylation is required for the correct folding and cleavage of Notch. The protein is O-glucosyltransferase rumi of Drosophila melanogaster (Fruit fly).